We begin with the raw amino-acid sequence, 348 residues long: Selenide, water dikinase (348 aa).

C17 is a catalytic residue. Residues K20 and 48–50 each bind ATP; that span reads TRD. Residue D51 participates in Mg(2+) binding. Residues D68, D91, and 139–141 contribute to the ATP site; that span reads GHS. D91 contacts Mg(2+). D227 is a Mg(2+) binding site.

Belongs to the selenophosphate synthase 1 family. Class I subfamily. Homodimer. Requires Mg(2+) as cofactor.

It carries out the reaction hydrogenselenide + ATP + H2O = selenophosphate + AMP + phosphate + 2 H(+). Its function is as follows. Synthesizes selenophosphate from selenide and ATP. In Yersinia pseudotuberculosis serotype I (strain IP32953), this protein is Selenide, water dikinase.